We begin with the raw amino-acid sequence, 119 residues long: Beta-2-microglobulin (119 aa).

Positions 1–20 are cleaved as a signal peptide; it reads MARFVVVALLVLLSLSGLEA. Residues 25-114 form the Ig-like C1-type domain; sequence PKIQVYSRHP…VTLSTPKTVK (90 aa). A disulfide bridge links C45 with C100.

It belongs to the beta-2-microglobulin family. Heterodimer of an alpha chain and a beta chain. Beta-2-microglobulin is the beta-chain of major histocompatibility complex class I molecules.

The protein resides in the secreted. Its function is as follows. Component of the class I major histocompatibility complex (MHC). Involved in the presentation of peptide antigens to the immune system. The polypeptide is Beta-2-microglobulin (B2M) (Aotus azarae (Azara's night monkey)).